A 177-amino-acid chain; its full sequence is Large ribosomal subunit protein uL6 (177 aa).

It belongs to the universal ribosomal protein uL6 family. As to quaternary structure, part of the 50S ribosomal subunit.

In terms of biological role, this protein binds to the 23S rRNA, and is important in its secondary structure. It is located near the subunit interface in the base of the L7/L12 stalk, and near the tRNA binding site of the peptidyltransferase center. The chain is Large ribosomal subunit protein uL6 from Alkalilimnicola ehrlichii (strain ATCC BAA-1101 / DSM 17681 / MLHE-1).